A 767-amino-acid chain; its full sequence is Ribonucleoside-diphosphate reductase subunit alpha (767 aa).

The tract at residues 1–30 (MHPTLISAPISSSANDAHAGTSQGSHQGHR) is disordered. Residues 9–26 (PISSSANDAHAGTSQGSH) show a composition bias toward polar residues. Positions 31 to 120 (IQVIRRDGSS…VWSLWKDTLV (90 aa)) constitute an ATP-cone domain. Residues T228, 243–244 (SC), G272, 460–464 (NLCCE), and 631–635 (PNTSS) contribute to the substrate site. C244 and C478 are joined by a disulfide. The Proton acceptor role is filled by N460. C462 serves as the catalytic Cysteine radical intermediate. E464 functions as the Proton acceptor in the catalytic mechanism.

It belongs to the ribonucleoside diphosphate reductase large chain family. Tetramer of two alpha and two beta subunits.

It carries out the reaction a 2'-deoxyribonucleoside 5'-diphosphate + [thioredoxin]-disulfide + H2O = a ribonucleoside 5'-diphosphate + [thioredoxin]-dithiol. Under complex allosteric control mediated by deoxynucleoside triphosphates and ATP binding. The type of nucleotide bound at the specificity site determines substrate preference. It seems probable that ATP makes the enzyme reduce CDP and UDP, dGTP favors ADP reduction and dTTP favors GDP reduction. Functionally, provides the precursors necessary for DNA synthesis. Catalyzes the biosynthesis of deoxyribonucleotides from the corresponding ribonucleotides. The sequence is that of Ribonucleoside-diphosphate reductase subunit alpha (nrdA) from Synechocystis sp. (strain ATCC 27184 / PCC 6803 / Kazusa).